The primary structure comprises 255 residues: NAD kinase (255 aa).

Catalysis depends on Asp-44, which acts as the Proton acceptor. NAD(+)-binding positions include 44–45, His-49, 114–115, Asp-144, Ala-152, 155–160, and Gln-216; these read DG, NE, and SAYNLS.

It belongs to the NAD kinase family. A divalent metal cation serves as cofactor.

It is found in the cytoplasm. The catalysed reaction is NAD(+) + ATP = ADP + NADP(+) + H(+). In terms of biological role, involved in the regulation of the intracellular balance of NAD and NADP, and is a key enzyme in the biosynthesis of NADP. Catalyzes specifically the phosphorylation on 2'-hydroxyl of the adenosine moiety of NAD to yield NADP. This is NAD kinase from Rickettsia conorii (strain ATCC VR-613 / Malish 7).